Consider the following 66-residue polypeptide: KEGYLVSKSTGCKYECLKLGDNDYCLRECKQQYGKSSGGYCYAFACWCTHLYEQAVVWPLPNKTCN.

The LCN-type CS-alpha/beta domain occupies 1-66 (KEGYLVSKST…VWPLPNKTCN (66 aa)). Cystine bridges form between Cys-12-Cys-65, Cys-16-Cys-41, Cys-25-Cys-46, and Cys-29-Cys-48. Asparagine amide is present on Asn-66.

The protein belongs to the long (4 C-C) scorpion toxin superfamily. Sodium channel inhibitor family. Beta subfamily. C-terminal amidation increases its affinity for sodium channels. As to expression, expressed by the venom gland.

Its subcellular location is the secreted. Its function is as follows. Beta toxin that binds site-4 of sodium channels (Nav) and reduces peak current (observed on Nav1.6/SCN8A (IC(50)=307 nM)), shifts the voltage of activation toward more negative potentials (observed on Nav1.6, Nav1.1 (weak), Nav1.2 (weak), and Nav1.7 (weak)), and induces resurgent currents at negative voltages following brief and strong depolarizations (observed on Nav1.6, Nav1.1 (weak), and Nav1.7 (weak)). A reduction of peak current of Nav1.5/SCN7A has been observed in another study (IC(50)=35-40 nM). This toxin is only active on mammals. It has been shown to bind phospholipids. The sequence is that of Beta-mammal toxin Css2 from Centruroides suffusus (Durango bark scorpion).